The sequence spans 258 residues: Imidazole glycerol phosphate synthase subunit HisF (258 aa).

Active-site residues include aspartate 11 and aspartate 130.

Belongs to the HisA/HisF family. As to quaternary structure, heterodimer of HisH and HisF.

It localises to the cytoplasm. It catalyses the reaction 5-[(5-phospho-1-deoxy-D-ribulos-1-ylimino)methylamino]-1-(5-phospho-beta-D-ribosyl)imidazole-4-carboxamide + L-glutamine = D-erythro-1-(imidazol-4-yl)glycerol 3-phosphate + 5-amino-1-(5-phospho-beta-D-ribosyl)imidazole-4-carboxamide + L-glutamate + H(+). The protein operates within amino-acid biosynthesis; L-histidine biosynthesis; L-histidine from 5-phospho-alpha-D-ribose 1-diphosphate: step 5/9. IGPS catalyzes the conversion of PRFAR and glutamine to IGP, AICAR and glutamate. The HisF subunit catalyzes the cyclization activity that produces IGP and AICAR from PRFAR using the ammonia provided by the HisH subunit. The sequence is that of Imidazole glycerol phosphate synthase subunit HisF from Blochmanniella floridana.